We begin with the raw amino-acid sequence, 654 residues long: Endoplasmic reticulum chaperone BiP (654 aa).

The N-terminal stretch at 1-18 (MKFTVVAAALLLLCAVRA) is a signal peptide. Residues 1 to 80 (MKFTVVAAAL…EGERLIGDAA (80 aa)) form a required for interaction with ELAPOR1 region. 36 to 39 (GTTY) serves as a coordination point for ATP. The residue at position 86 (Ser86) is a Phosphoserine. Lys96 contacts ATP. Lys125 is subject to N6-acetyllysine. The segment at 125–280 (KPYIQVDIGG…KKKTGKDVRK (156 aa)) is nucleotide-binding (NBD). At Tyr160 the chain carries 3'-nitrotyrosine. Lys213 carries the N6-acetyllysine modification. Residue 227 to 229 (GGT) participates in ATP binding. Position 271 is an N6-acetyllysine (Lys271). 293 to 300 (EKAKRALS) contacts ATP. Lys326 carries the post-translational modification N6-acetyllysine. Lys352 is covalently cross-linked (Glycyl lysine isopeptide (Lys-Gly) (interchain with G-Cter in SUMO2)). Lys353 is subject to N6-acetyllysine; alternate. A Glycyl lysine isopeptide (Lys-Gly) (interchain with G-Cter in SUMO1); alternate cross-link involves residue Lys353. 364-367 (GSTR) is a binding site for ATP. The tract at residues 409–419 (QDTGDLVLLDV) is interdomain linker. The segment at 420 to 500 (CPLTLGIETV…PRGVPQIEVT (81 aa)) is substrate-binding (SBD). Lys447 is modified (N6-succinyllysine). Residue Arg492 is modified to Omega-N-methylarginine. The residue at position 518 (Thr518) is an O-AMP-threonine; alternate. The residue at position 518 (Thr518) is a Phosphothreonine; alternate. At Lys585 the chain carries N6,N6,N6-trimethyllysine; by METTL21A; in vitro. Position 585 is an N6,N6-dimethyllysine; alternate (Lys585). Lys585 carries the N6-methyllysine; alternate modification. Lys591 carries the post-translational modification N6-methyllysine. The segment at 631–654 (ISKLYGSGGPPPTGEEDTSEKDEL) is disordered. Thr643 and Thr648 each carry phosphothreonine. A compositionally biased stretch (acidic residues) spans 644–654 (GEEDTSEKDEL). Ser649 carries the post-translational modification Phosphoserine. The Prevents secretion from ER signature appears at 651-654 (KDEL).

It belongs to the heat shock protein 70 family. Monomer and homooligomer; homooligomerization via the interdomain linker inactivates the chaperone activity and acts as a storage of HSPA5/BiP molecules. Interacts with DNAJC1 (via J domain). Component of an EIF2 complex at least composed of CELF1/CUGBP1, CALR, CALR3, EIF2S1, EIF2S2, HSP90B1 and HSPA5. Part of a large chaperone multiprotein complex comprising DNAJB11, HSP90B1, HSPA5, HYOU, PDIA2, PDIA4, PDIA6, PPIB, SDF2L1, UGGT1 and very small amounts of ERP29, but not, or at very low levels, CALR nor CANX. Interacts with TMEM132A and TRIM21. May form a complex with ERLEC1, OS9, SEL1L and SYVN1. Interacts with DNAJC10. Interacts with DNAJB9/ERdj4; leading to recruit HSPA5/BiP to ERN1/IRE1. Interacts with ERN1/IRE1 (via luminal domain); the interaction takes place following interaction with DNAJB9/ERdj4 and leads to inactivate ERN1/IRE1, the interaction also competitively inhibits ERN1 interaction with MANF. Interacts directly with MANF (via SAP domain); the interaction inhibits ATP binding to HSPA5/BiP and subsequent nucleotide exchange. Interacts with EIF2AK3/PERK (via luminal domain); interaction leads to inactivate EIF2AK3/PERK. Interacts with MX1. Interacts with METTL23. Interacts with CEMIP; the interaction induces calcium leakage from the endoplasmic reticulum and cell migration. Interacts with PCSK4 form; the interaction takes place in the endoplasmic reticulum. Interacts with CIPC. Interacts with CCDC88B (via C-terminus); the interaction opposes ERN1-mediated JNK activation, protecting against apoptosis. Interacts with INPP5K; necessary for INPP5K localization at the endoplasmic reticulum. Interacts with MANF; the interaction is direct. Interacts with LOXL2; leading to activate the ERN1/IRE1-XBP1 pathway of the unfolded protein response. Interacts with CLU under stressed condition; interaction increases CLU protein stability; facilitates its retrotranslocation and redistribution to the mitochondria; cooperatively suppress stress-induced apoptosis by stabilizing mitochondrial membrane integrity. Interacts with CCDC47. Interacts with CLN3. Interacts with ELAPOR1; may regulate the function of HSPA5 in apoptosis and cell proliferation. Interacts with CASP7. Interacts with ILDR2; the interaction stabilizes ILDR2 expression. Interacts with ADAM7. Post-translationally, in unstressed cells, AMPylation at Thr-518 by FICD inactivates the chaperome activity: AMPylated form is locked in a relatively inert state and only weakly stimulated by J domain-containing proteins. In response to endoplasmic reticulum stress, de-AMPylation by the same protein, FICD, restores the chaperone activity.

Its subcellular location is the endoplasmic reticulum lumen. It is found in the melanosome. It localises to the cytoplasm. The protein localises to the cell surface. The catalysed reaction is ATP + H2O = ADP + phosphate + H(+). Its activity is regulated as follows. The chaperone activity is regulated by ATP-induced allosteric coupling of the nucleotide-binding (NBD) and substrate-binding (SBD) domains. In the ADP-bound and nucleotide-free (apo) states, the two domains have little interaction. In contrast, in the ATP-bound state the two domains are tightly coupled, which results in drastically accelerated kinetics in both binding and release of polypeptide substrates. J domain-containing co-chaperones (DNAJB9/ERdj4 or DNAJC10/ERdj5) stimulate the ATPase activity and are required for efficient substrate recognition by HSPA5/BiP. Homooligomerization inactivates participating HSPA5/BiP protomers and probably act as reservoirs to store HSPA5/BiP molecules when they are not needed by the cell. In terms of biological role, endoplasmic reticulum chaperone that plays a key role in protein folding and quality control in the endoplasmic reticulum lumen. Involved in the correct folding of proteins and degradation of misfolded proteins via its interaction with DNAJC10/ERdj5, probably to facilitate the release of DNAJC10/ERdj5 from its substrate. Acts as a key repressor of the EIF2AK3/PERK and ERN1/IRE1-mediated unfolded protein response (UPR). In the unstressed endoplasmic reticulum, recruited by DNAJB9/ERdj4 to the luminal region of ERN1/IRE1, leading to disrupt the dimerization of ERN1/IRE1, thereby inactivating ERN1/IRE1. Also binds and inactivates EIF2AK3/PERK in unstressed cells. Accumulation of misfolded protein in the endoplasmic reticulum causes release of HSPA5/BiP from ERN1/IRE1 and EIF2AK3/PERK, allowing their homodimerization and subsequent activation. Plays an auxiliary role in post-translational transport of small presecretory proteins across endoplasmic reticulum (ER). May function as an allosteric modulator for SEC61 channel-forming translocon complex, likely cooperating with SEC62 to enable the productive insertion of these precursors into SEC61 channel. Appears to specifically regulate translocation of precursors having inhibitory residues in their mature region that weaken channel gating. May also play a role in apoptosis and cell proliferation. The sequence is that of Endoplasmic reticulum chaperone BiP from Rattus norvegicus (Rat).